A 436-amino-acid polypeptide reads, in one-letter code: Serine/threonine-protein kinase 40 (436 aa).

Residues 1–10 show a composition bias toward basic and acidic residues; that stretch reads MKRRASDRGA. The segment at 1-25 is disordered; sequence MKRRASDRGAGETSARAKALGSGIS. The Protein kinase domain maps to 35–332; that stretch reads FILGPRLGNS…DVLEALSSII (298 aa). Residues 41–49 and lysine 66 each bind ATP; that span reads LGNSPVPSI. Aspartate 197 (proton acceptor) is an active-site residue. Residues 396 to 417 form a disordered region; it reads RSWVPKRQSGAGVPPVRRLGHD.

This sequence belongs to the protein kinase superfamily. CAMK Ser/Thr protein kinase family.

The protein localises to the nucleus. Its subcellular location is the cytoplasm. It carries out the reaction L-seryl-[protein] + ATP = O-phospho-L-seryl-[protein] + ADP + H(+). The enzyme catalyses L-threonyl-[protein] + ATP = O-phospho-L-threonyl-[protein] + ADP + H(+). May be a negative regulator of NF-kappa-B and p53-mediated gene transcription. The sequence is that of Serine/threonine-protein kinase 40 (STK40) from Bos taurus (Bovine).